We begin with the raw amino-acid sequence, 291 residues long: Tyrosine recombinase XerD (291 aa).

Positions 1–82 constitute a Core-binding (CB) domain; sequence MEEGLIDRLL…ACKRLYIWME (82 aa). The region spanning 103-285 is the Tyr recombinase domain; that stretch reads NIPTLITEQQ…ANVWLQGVVK (183 aa). Residues R143, K167, H237, R240, and H263 contribute to the active site. The active-site O-(3'-phospho-DNA)-tyrosine intermediate is Y272.

It belongs to the 'phage' integrase family. XerD subfamily. Forms a cyclic heterotetrameric complex composed of two molecules of XerC and two molecules of XerD.

It is found in the cytoplasm. Functionally, site-specific tyrosine recombinase, which acts by catalyzing the cutting and rejoining of the recombining DNA molecules. The XerC-XerD complex is essential to convert dimers of the bacterial chromosome into monomers to permit their segregation at cell division. It also contributes to the segregational stability of plasmids. The polypeptide is Tyrosine recombinase XerD (Neisseria meningitidis serogroup A / serotype 4A (strain DSM 15465 / Z2491)).